The chain runs to 163 residues: MAKESSFDIVSKVELPEVQNAIQTALKEIGTRYDFKGSKSSITLEGDELVLVSDDEFKMNQLKDVLVGKLIKRNVPTKNIEYSKLENASGGTVRQRGKLVQGIDKENAKKINNLIKKSGLKVKSQVQDDQVRVTGKNKDDLQQIIAMVREADLPIDVQFINFR.

Belongs to the YajQ family.

Functionally, nucleotide-binding protein. The chain is Nucleotide-binding protein BLi01194 from Bacillus licheniformis (strain ATCC 14580 / DSM 13 / JCM 2505 / CCUG 7422 / NBRC 12200 / NCIMB 9375 / NCTC 10341 / NRRL NRS-1264 / Gibson 46).